The sequence spans 259 residues: UPF0246 protein Aave_1172 (259 aa).

The protein belongs to the UPF0246 family.

This is UPF0246 protein Aave_1172 from Paracidovorax citrulli (strain AAC00-1) (Acidovorax citrulli).